The following is an 88-amino-acid chain: Small ribosomal subunit protein bS20 (88 aa).

Residues 1–21 (MANTTSAKKATRKIARRTAVN) are disordered.

It belongs to the bacterial ribosomal protein bS20 family.

Functionally, binds directly to 16S ribosomal RNA. This is Small ribosomal subunit protein bS20 from Sinorhizobium fredii (strain NBRC 101917 / NGR234).